The following is a 169-amino-acid chain: Lutropin/choriogonadotropin subunit beta (169 aa).

Residues 1–20 form the signal peptide; sequence METLQGLLLWMLLSVGGVWA. 6 disulfide bridges follow: Cys29-Cys77, Cys43-Cys92, Cys46-Cys130, Cys54-Cys108, Cys58-Cys110, and Cys113-Cys120. N-linked (GlcNAc...) asparagine glycosylation occurs at Asn33. Positions 131-169 are disordered; it reads APQASSSSKDPPSQPLTSTSTPTPGASRRSSHPLPIKTS. Ser138 and Ser143 each carry an O-linked (GalNAc...) serine glycan. Over residues 145–158 the composition is skewed to low complexity; that stretch reads PLTSTSTPTPGASR. O-linked (GalNAc...) threonine glycosylation is present at Thr147. Ser148 is a glycosylation site (O-linked (GalNAc...) serine). O-linked (GalNAc...) threonine glycosylation occurs at Thr149. An O-linked (GalNAc...) serine glycan is attached at Ser150. 2 O-linked (GalNAc...) threonine glycosylation sites follow: Thr151 and Thr153. Residues Ser157, Ser160, Ser161, and Ser169 are each glycosylated (O-linked (GalNAc...) serine).

It belongs to the glycoprotein hormones subunit beta family. Heterodimer of a common alpha chain and a unique beta chain which confers biological specificity to thyrotropin, lutropin, follitropin and gonadotropin. Post-translationally, microheterogeneity at Asn-33. O-glycosylation appears to be responsible for the beta subunit contribution to the difference in LH-receptor binding activity between LSH-B and CG-B.

The protein localises to the secreted. Functionally, promotes spermatogenesis and ovulation by stimulating the testes and ovaries to synthesize steroids. The protein is Lutropin/choriogonadotropin subunit beta (LHB) of Equus caballus (Horse).